A 218-amino-acid chain; its full sequence is Elongation factor Ts (218 aa).

An involved in Mg(2+) ion dislocation from EF-Tu region spans residues 82-85 (TDFV).

This sequence belongs to the EF-Ts family.

The protein resides in the cytoplasm. Functionally, associates with the EF-Tu.GDP complex and induces the exchange of GDP to GTP. It remains bound to the aminoacyl-tRNA.EF-Tu.GTP complex up to the GTP hydrolysis stage on the ribosome. The polypeptide is Elongation factor Ts (Prochlorococcus marinus (strain MIT 9313)).